Consider the following 194-residue polypeptide: Fe/S biogenesis protein NfuA (194 aa).

2 residues coordinate [4Fe-4S] cluster: C152 and C155.

It belongs to the NfuA family. As to quaternary structure, homodimer. The cofactor is [4Fe-4S] cluster.

Involved in iron-sulfur cluster biogenesis. Binds a 4Fe-4S cluster, can transfer this cluster to apoproteins, and thereby intervenes in the maturation of Fe/S proteins. Could also act as a scaffold/chaperone for damaged Fe/S proteins. The chain is Fe/S biogenesis protein NfuA from Pseudomonas fluorescens (strain Pf0-1).